Reading from the N-terminus, the 376-residue chain is NifS-like protein (376 aa).

Pyridoxal 5'-phosphate is bound by residues 58–59 and 184–186; these read SE and SLN.

The protein belongs to the class-V pyridoxal-phosphate-dependent aminotransferase family. NifS/IscS subfamily. Pyridoxal 5'-phosphate is required as a cofactor.

It localises to the virion. The protein is NifS-like protein of African swine fever virus (isolate Tick/Malawi/Lil 20-1/1983) (ASFV).